The following is a 392-amino-acid chain: O-phospho-L-seryl-tRNA:Cys-tRNA synthase (392 aa).

Pyridoxal 5'-phosphate contacts are provided by residues 84–85 (AR), N191, and 214–216 (SGH). At K217 the chain carries N6-(pyridoxal phosphate)lysine.

The protein belongs to the SepCysS family. As to quaternary structure, homodimer. Interacts with SepRS. It depends on pyridoxal 5'-phosphate as a cofactor.

It catalyses the reaction O-phospho-L-seryl-tRNA(Cys) + hydrogen sulfide + H(+) = L-cysteinyl-tRNA(Cys) + phosphate. In terms of biological role, converts O-phospho-L-seryl-tRNA(Cys) (Sep-tRNA(Cys)) to L-cysteinyl-tRNA(Cys) (Cys-tRNA(Cys)). This chain is O-phospho-L-seryl-tRNA:Cys-tRNA synthase, found in Methanopyrus kandleri (strain AV19 / DSM 6324 / JCM 9639 / NBRC 100938).